The primary structure comprises 341 residues: MKEVAIIGATGYTGAELLRLLANHEKVNVTYITSRKEAGKHVFKVHPHLKGIEKYKNLCFTGDIDKVDAYLVFTATPHGASMDIVPDFIERGMKVIDLSGDYRFEDLSLYEKYYKIKHKGLPDVKIAYGLPELHREEIKEAQLVANPGCFPTGAILAVAPLVKENIIEERIIFDSKTGVSGAGIKPTETTHFPNVNENINPYKITTHRHTPEIEKELKKLGKAKVSFTPHLAPITRGILTTAHTFLAKDVDREEIIKIYEKFYGSEVFVRIFSEEIPKLTWVRGTNFCDIGGFEIDEHGRLVVISAIDNLVKGASGQAIQNMNIMFGFDEKEGLFDVGLNP.

Cysteine 149 is a catalytic residue.

Belongs to the NAGSA dehydrogenase family. Type 1 subfamily.

The protein localises to the cytoplasm. It carries out the reaction N-acetyl-L-glutamate 5-semialdehyde + phosphate + NADP(+) = N-acetyl-L-glutamyl 5-phosphate + NADPH + H(+). It functions in the pathway amino-acid biosynthesis; L-arginine biosynthesis; N(2)-acetyl-L-ornithine from L-glutamate: step 3/4. Functionally, catalyzes the NADPH-dependent reduction of N-acetyl-5-glutamyl phosphate to yield N-acetyl-L-glutamate 5-semialdehyde. The chain is N-acetyl-gamma-glutamyl-phosphate reductase from Methanocaldococcus jannaschii (strain ATCC 43067 / DSM 2661 / JAL-1 / JCM 10045 / NBRC 100440) (Methanococcus jannaschii).